The following is a 47-amino-acid chain: Large ribosomal subunit protein bL34 (47 aa).

It belongs to the bacterial ribosomal protein bL34 family.

The chain is Large ribosomal subunit protein bL34 (rpmH) from Mycolicibacterium smegmatis (strain ATCC 700084 / mc(2)155) (Mycobacterium smegmatis).